The following is a 316-amino-acid chain: Ribosomal RNA small subunit methyltransferase H (316 aa).

S-adenosyl-L-methionine is bound by residues 35–37, Asp55, Phe84, Asp105, and Gln112; that span reads AGH.

It belongs to the methyltransferase superfamily. RsmH family.

The protein localises to the cytoplasm. The enzyme catalyses cytidine(1402) in 16S rRNA + S-adenosyl-L-methionine = N(4)-methylcytidine(1402) in 16S rRNA + S-adenosyl-L-homocysteine + H(+). Functionally, specifically methylates the N4 position of cytidine in position 1402 (C1402) of 16S rRNA. In Streptococcus pneumoniae (strain P1031), this protein is Ribosomal RNA small subunit methyltransferase H.